Here is a 329-residue protein sequence, read N- to C-terminus: Aspartate--ammonia ligase (329 aa).

It belongs to the class-II aminoacyl-tRNA synthetase family. AsnA subfamily.

The protein resides in the cytoplasm. The enzyme catalyses L-aspartate + NH4(+) + ATP = L-asparagine + AMP + diphosphate + H(+). The protein operates within amino-acid biosynthesis; L-asparagine biosynthesis; L-asparagine from L-aspartate (ammonia route): step 1/1. In Ureaplasma urealyticum serovar 10 (strain ATCC 33699 / Western), this protein is Aspartate--ammonia ligase.